The following is a 315-amino-acid chain: Acetyl-coenzyme A carboxylase carboxyl transferase subunit alpha (315 aa).

One can recognise a CoA carboxyltransferase C-terminal domain in the interval 40 to 293; sequence LQDKSKTLTE…REELSSQLAM (254 aa).

Belongs to the AccA family. Acetyl-CoA carboxylase is a heterohexamer composed of biotin carboxyl carrier protein (AccB), biotin carboxylase (AccC) and two subunits each of ACCase subunit alpha (AccA) and ACCase subunit beta (AccD).

Its subcellular location is the cytoplasm. The catalysed reaction is N(6)-carboxybiotinyl-L-lysyl-[protein] + acetyl-CoA = N(6)-biotinyl-L-lysyl-[protein] + malonyl-CoA. The protein operates within lipid metabolism; malonyl-CoA biosynthesis; malonyl-CoA from acetyl-CoA: step 1/1. Its function is as follows. Component of the acetyl coenzyme A carboxylase (ACC) complex. First, biotin carboxylase catalyzes the carboxylation of biotin on its carrier protein (BCCP) and then the CO(2) group is transferred by the carboxyltransferase to acetyl-CoA to form malonyl-CoA. The chain is Acetyl-coenzyme A carboxylase carboxyl transferase subunit alpha from Pseudomonas savastanoi pv. phaseolicola (strain 1448A / Race 6) (Pseudomonas syringae pv. phaseolicola (strain 1448A / Race 6)).